Reading from the N-terminus, the 427-residue chain is METFWLRVSFWVALVGGVISDNPESYSTNLSIHVDSVTTFRGTELSFVVTTHQPTNLALPSNGSMHNYCPQQTKITSAFKYINTVISCTIFIVGMVGNATLLRIIYQNKCMRNGPNALIASLALGDLIYVVIDLPINVFKLLAGRWPFEQNDFGVFLCKLFPFLQKSSVGITVLNLCALSVDRYRAVASWSRVQGIGIPLVTAIEIVSIWILSFILAIPEAIGFVMVPFEYKGAQHRTCMLNATSKFMEFYQDVKDWWLFGFYFCMPLVCTAIFYTLMTCEMLNRRNGSLRIALSEHLKQRREVAKTVFCLVVIFALCWFPLHLSRILKKTVYDEMDTNRCELLSFLLLMDYIGINLATMNSCINPIALYFVSKKFKNCFQSCLCCCCYQSKSLMTSVPMNGTSIQWKNPEQNNHNTERSSHKDSIN.

The N-terminal stretch at 1-20 (METFWLRVSFWVALVGGVIS) is a signal peptide. The Extracellular portion of the chain corresponds to 21–80 (DNPESYSTNLSIHVDSVTTFRGTELSFVVTTHQPTNLALPSNGSMHNYCPQQTKITSAFK). N-linked (GlcNAc...) asparagine glycans are attached at residues Asn-29 and Asn-62. The helical transmembrane segment at 81–102 (YINTVISCTIFIVGMVGNATLL) threads the bilayer. The Cytoplasmic segment spans residues 103-112 (RIIYQNKCMR). Residues 113–132 (NGPNALIASLALGDLIYVVI) form a helical membrane-spanning segment. Residues 133 to 159 (DLPINVFKLLAGRWPFEQNDFGVFLCK) are Extracellular-facing. An intrachain disulfide couples Cys-158 to Cys-239. A helical membrane pass occupies residues 160 to 181 (LFPFLQKSSVGITVLNLCALSV). At 182-205 (DRYRAVASWSRVQGIGIPLVTAIE) the chain is on the cytoplasmic side. Residues 206-229 (IVSIWILSFILAIPEAIGFVMVPF) form a helical membrane-spanning segment. Over 230-256 (EYKGAQHRTCMLNATSKFMEFYQDVKD) the chain is Extracellular. A helical transmembrane segment spans residues 257–278 (WWLFGFYFCMPLVCTAIFYTLM). Residues 279 to 306 (TCEMLNRRNGSLRIALSEHLKQRREVAK) lie on the Cytoplasmic side of the membrane. Residues 307-328 (TVFCLVVIFALCWFPLHLSRIL) form a helical membrane-spanning segment. Residues 329-347 (KKTVYDEMDTNRCELLSFL) lie on the Extracellular side of the membrane. A helical transmembrane segment spans residues 348–372 (LLMDYIGINLATMNSCINPIALYFV). Over 373–427 (SKKFKNCFQSCLCCCCYQSKSLMTSVPMNGTSIQWKNPEQNNHNTERSSHKDSIN) the chain is Cytoplasmic. Positions 405 to 415 (IQWKNPEQNNH) are enriched in polar residues. The segment at 405–427 (IQWKNPEQNNHNTERSSHKDSIN) is disordered. Positions 416 to 427 (NTERSSHKDSIN) are enriched in basic and acidic residues. Ser-425 is modified (phosphoserine).

Belongs to the G-protein coupled receptor 1 family. Endothelin receptor subfamily. EDNRA sub-subfamily. As to quaternary structure, interacts with HDAC7 and KAT5.

It is found in the cell membrane. In terms of biological role, receptor for endothelin-1. Mediates its action by association with G proteins that activate a phosphatidylinositol-calcium second messenger system. The rank order of binding affinities for ET-A is: ET1 &gt; ET2 &gt;&gt; ET3. This Ovis aries (Sheep) protein is Endothelin-1 receptor.